A 147-amino-acid polypeptide reads, in one-letter code: Large ribosomal subunit protein bL9 (147 aa).

The protein belongs to the bacterial ribosomal protein bL9 family.

Functionally, binds to the 23S rRNA. This is Large ribosomal subunit protein bL9 from Gemmatimonas aurantiaca (strain DSM 14586 / JCM 11422 / NBRC 100505 / T-27).